Here is a 158-residue protein sequence, read N- to C-terminus: Small ribosomal subunit protein uS9 (158 aa).

Belongs to the universal ribosomal protein uS9 family.

The chain is Small ribosomal subunit protein uS9 from Rhodopseudomonas palustris (strain HaA2).